Consider the following 218-residue polypeptide: Superoxide dismutase [Mn] 2, mitochondrial (218 aa).

The transit peptide at 1 to 24 (MLQSTARTASKLVQPVAGVLAVRS) directs the protein to the mitochondrion. 4 residues coordinate Mn(2+): His-50, His-98, Asp-179, and His-183.

Belongs to the iron/manganese superoxide dismutase family. In terms of assembly, homotetramer. The cofactor is Mn(2+). As to expression, expressed in pharynx and rectum. Upon thermal stress, expressed in vulva, body wall muscles and hypodermis.

The protein localises to the mitochondrion. It carries out the reaction 2 superoxide + 2 H(+) = H2O2 + O2. Destroys superoxide anion radicals which are normally produced within the cells and which are toxic to biological systems. The polypeptide is Superoxide dismutase [Mn] 2, mitochondrial (sod-3) (Caenorhabditis elegans).